Reading from the N-terminus, the 200-residue chain is MSITLESLSACLKNALGDALVQTIERLGELTLVVKPQAYAPAMLALRDHPDCRFEQLIDLCGVDYSGYGEGAWEGPRFAVVAHLLSVSKNARVRVRVFCPDDDLPAVASVVDIWPAASWFEREAFDLYGIVFEGHPDLRRILTDYGFIGHPFRKDFPLSGNVEMRYDPTQQRVIYQPVSIEPRDNVPRVVRDESYGDGRA.

This sequence belongs to the complex I 30 kDa subunit family. As to quaternary structure, NDH-1 is composed of 14 different subunits. Subunits NuoB, C, D, E, F, and G constitute the peripheral sector of the complex.

It is found in the cell inner membrane. The enzyme catalyses a quinone + NADH + 5 H(+)(in) = a quinol + NAD(+) + 4 H(+)(out). Functionally, NDH-1 shuttles electrons from NADH, via FMN and iron-sulfur (Fe-S) centers, to quinones in the respiratory chain. The immediate electron acceptor for the enzyme in this species is believed to be ubiquinone. Couples the redox reaction to proton translocation (for every two electrons transferred, four hydrogen ions are translocated across the cytoplasmic membrane), and thus conserves the redox energy in a proton gradient. This Thiobacillus denitrificans (strain ATCC 25259 / T1) protein is NADH-quinone oxidoreductase subunit C.